Consider the following 412-residue polypeptide: Multifunctional CCA protein (412 aa).

2 residues coordinate ATP: glycine 8 and arginine 11. 2 residues coordinate CTP: glycine 8 and arginine 11. Mg(2+)-binding residues include aspartate 21 and aspartate 23. ATP-binding residues include arginine 91, arginine 137, and arginine 140. Positions 91, 137, and 140 each coordinate CTP. The HD domain occupies 228 to 329 (TGIHTLMTLS…VKLFDSIDAW (102 aa)).

It belongs to the tRNA nucleotidyltransferase/poly(A) polymerase family. Bacterial CCA-adding enzyme type 1 subfamily. As to quaternary structure, monomer. Can also form homodimers and oligomers. Requires Mg(2+) as cofactor. Ni(2+) serves as cofactor.

It carries out the reaction a tRNA precursor + 2 CTP + ATP = a tRNA with a 3' CCA end + 3 diphosphate. It catalyses the reaction a tRNA with a 3' CCA end + 2 CTP + ATP = a tRNA with a 3' CCACCA end + 3 diphosphate. Catalyzes the addition and repair of the essential 3'-terminal CCA sequence in tRNAs without using a nucleic acid template. Adds these three nucleotides in the order of C, C, and A to the tRNA nucleotide-73, using CTP and ATP as substrates and producing inorganic pyrophosphate. tRNA 3'-terminal CCA addition is required both for tRNA processing and repair. Also involved in tRNA surveillance by mediating tandem CCA addition to generate a CCACCA at the 3' terminus of unstable tRNAs. While stable tRNAs receive only 3'-terminal CCA, unstable tRNAs are marked with CCACCA and rapidly degraded. This Escherichia coli O7:K1 (strain IAI39 / ExPEC) protein is Multifunctional CCA protein.